Reading from the N-terminus, the 156-residue chain is Small ribosomal subunit protein uS7c (156 aa).

Belongs to the universal ribosomal protein uS7 family. In terms of assembly, part of the 30S ribosomal subunit.

It is found in the plastid. The protein localises to the chloroplast. One of the primary rRNA binding proteins, it binds directly to 16S rRNA where it nucleates assembly of the head domain of the 30S subunit. This chain is Small ribosomal subunit protein uS7c (rps7), found in Chlorokybus atmophyticus (Soil alga).